Reading from the N-terminus, the 198-residue chain is Recombination protein RecR (198 aa).

Residues 57 to 72 form a C4-type zinc finger; sequence CDKCNTFTEAQICEVC. One can recognise a Toprim domain in the interval 80-175; the sequence is TLLCVVETPA…AVTRLARGVP (96 aa).

This sequence belongs to the RecR family.

Its function is as follows. May play a role in DNA repair. It seems to be involved in an RecBC-independent recombinational process of DNA repair. It may act with RecF and RecO. The sequence is that of Recombination protein RecR from Burkholderia multivorans (strain ATCC 17616 / 249).